The primary structure comprises 1089 residues: Probable transport protein MmpL8 (1089 aa).

The disordered stretch occupies residues 1-26; sequence MCDVLMQPVRTPRPSTNLRSKPLRPT. Transmembrane regions (helical) follow at residues 44–64, 222–242, 257–277, 316–336, 349–369, 400–420, 555–575, 874–894, 898–918, 930–950, 973–993, and 996–1016; these read WVVI…VPSL, ITIL…TMVL, LVAI…IFMS, IGKV…GMVF, LGIS…ALMV, KTHL…AGLA, AIST…LLGG, IIAM…RAIV, YLIG…VIVF, IPGL…MLLI, GGVI…LVFA, and GSVV…TFLV. Residues 1056 to 1078 form a disordered region; the sequence is RTKRKPLLPKEEEEQSPPDDDDL. Acidic residues predominate over residues 1066–1078; sequence EEEEQSPPDDDDL.

This sequence belongs to the resistance-nodulation-cell division (RND) (TC 2.A.6) family. MmpL subfamily.

The protein resides in the cell membrane. This is Probable transport protein MmpL8 (mmpL8) from Mycobacterium tuberculosis (strain ATCC 25177 / H37Ra).